Consider the following 366-residue polypeptide: Anthranilate phosphoribosyltransferase (366 aa).

Residues Gly-103, 106 to 107, Thr-111, 113 to 116, 131 to 139, and Gly-143 contribute to the 5-phospho-alpha-D-ribose 1-diphosphate site; these read GD, NLST, and KHGNRASSS. Anthranilate is bound at residue Gly-103. Ser-115 provides a ligand contact to Mg(2+). Anthranilate is bound at residue Asn-134. Arg-189 provides a ligand contact to anthranilate. The Mg(2+) site is built by Asp-247 and Glu-248.

This sequence belongs to the anthranilate phosphoribosyltransferase family. Homodimer. Mg(2+) is required as a cofactor.

It catalyses the reaction N-(5-phospho-beta-D-ribosyl)anthranilate + diphosphate = 5-phospho-alpha-D-ribose 1-diphosphate + anthranilate. It functions in the pathway amino-acid biosynthesis; L-tryptophan biosynthesis; L-tryptophan from chorismate: step 2/5. Functionally, catalyzes the transfer of the phosphoribosyl group of 5-phosphorylribose-1-pyrophosphate (PRPP) to anthranilate to yield N-(5'-phosphoribosyl)-anthranilate (PRA). The sequence is that of Anthranilate phosphoribosyltransferase from Mycobacterium leprae (strain Br4923).